A 204-amino-acid chain; its full sequence is Large ribosomal subunit protein eL15 (204 aa).

This sequence belongs to the eukaryotic ribosomal protein eL15 family. Component of the large ribosomal subunit.

The protein localises to the cytoplasm. Functionally, component of the large ribosomal subunit. The ribosome is a large ribonucleoprotein complex responsible for the synthesis of proteins in the cell. The protein is Large ribosomal subunit protein eL15 (rpl15) of Carassius auratus (Goldfish).